The primary structure comprises 484 residues: UDP-N-acetylmuramoyl-L-alanyl-D-glutamate--L-lysine ligase (484 aa).

S43 serves as a coordination point for UDP-N-acetyl-alpha-D-muramoyl-L-alanyl-D-glutamate. Residue 119 to 125 (GTKGKTT) participates in ATP binding. Residues 161–162 (TT), S188, and R196 each bind UDP-N-acetyl-alpha-D-muramoyl-L-alanyl-D-glutamate. Residue K230 is modified to N6-carboxylysine. Residues 405 to 408 (DDPN) carry the L-lysine recognition motif motif.

This sequence belongs to the MurCDEF family. MurE subfamily. In terms of processing, carboxylation is probably crucial for Mg(2+) binding and, consequently, for the gamma-phosphate positioning of ATP.

It localises to the cytoplasm. It carries out the reaction UDP-N-acetyl-alpha-D-muramoyl-L-alanyl-D-glutamate + L-lysine + ATP = UDP-N-acetyl-alpha-D-muramoyl-L-alanyl-gamma-D-glutamyl-L-lysine + ADP + phosphate + H(+). It participates in cell wall biogenesis; peptidoglycan biosynthesis. Catalyzes the addition of L-lysine to the nucleotide precursor UDP-N-acetylmuramoyl-L-alanyl-D-glutamate (UMAG) in the biosynthesis of bacterial cell-wall peptidoglycan. The protein is UDP-N-acetylmuramoyl-L-alanyl-D-glutamate--L-lysine ligase of Streptococcus agalactiae serotype III (strain NEM316).